Reading from the N-terminus, the 425-residue chain is Polyribonucleotide 5'-hydroxyl-kinase Clp1 (425 aa).

Residues Glu-22, Lys-62, and 124 to 129 (DVGKST) contribute to the ATP site.

The protein belongs to the Clp1 family. Clp1 subfamily. As to quaternary structure, component of the tRNA splicing endonuclease complex, composed of CLP1, TSEN2, TSEN15, TSEN34 and TSEN54. Component of pre-mRNA cleavage complex II (CF-II). Also associates with numerous components of the pre-mRNA cleavage complex I (CF-I/CFIm), including NUDT21, CPSF2, CPSF3, CPSF6 and CPSF7. Interacts with CSTF2 and SYMPK. Mg(2+) is required as a cofactor. Requires Mn(2+) as cofactor. It depends on Ni(2+) as a cofactor.

The protein resides in the nucleus. It catalyses the reaction a 5'-end dephospho-2'-deoxyribonucleoside-DNA + ATP = a 5'-end 5'-phospho-2'-deoxyribonucleoside-DNA + ADP + H(+). It carries out the reaction a 5'-end dephospho-ribonucleoside-RNA + ATP = a 5'-end 5'-phospho-ribonucleoside-RNA + ADP + H(+). Functionally, polynucleotide kinase that can phosphorylate the 5'-hydroxyl groups of double-stranded RNA (dsRNA), single-stranded RNA (ssRNA), double-stranded DNA (dsDNA) and double-stranded DNA:RNA hybrids. dsRNA is phosphorylated more efficiently than dsDNA, and the RNA component of a DNA:RNA hybrid is phosphorylated more efficiently than the DNA component. Plays a key role in both tRNA splicing and mRNA 3'-end formation. Component of the tRNA splicing endonuclease complex: phosphorylates the 5'-terminus of the tRNA 3'-exon during tRNA splicing; this phosphorylation event is a prerequisite for the subsequent ligation of the two exon halves and the production of a mature tRNA. Its role in tRNA splicing and maturation is required for cerebellar development. Component of the pre-mRNA cleavage complex II (CF-II), which seems to be required for mRNA 3'-end formation. Also phosphorylates the 5'-terminus of exogenously introduced short interfering RNAs (siRNAs), which is a necessary prerequisite for their incorporation into the RNA-induced silencing complex (RISC). However, endogenous siRNAs and microRNAs (miRNAs) that are produced by the cleavage of dsRNA precursors by DICER1 already contain a 5'-phosphate group, so this protein may be dispensible for normal RNA-mediated gene silencing. The sequence is that of Polyribonucleotide 5'-hydroxyl-kinase Clp1 from Bos taurus (Bovine).